The chain runs to 800 residues: Cation/H(+) antiporter 9 (800 aa).

12 helical membrane-spanning segments follow: residues 43–63, 73–93, 110–130, 145–165, 186–206, 216–236, 247–267, 287–306, 338–358, 371–391, 401–421, and 430–450; these read VIFG…FVCI, IGIP…PQLL, NVAL…LMGV, IVIA…FRNF, VIVS…VYEL, IAIS…VCIS, GIAN…LFIF, VYLY…LSVF, LVTN…ADVV, ILLL…PCLI, VIIA…FDVA, and ATYT…PTII.

This sequence belongs to the monovalent cation:proton antiporter 2 (CPA2) transporter (TC 2.A.37) family. CHX (TC 2.A.37.4) subfamily.

It localises to the membrane. In terms of biological role, may operate as a cation/H(+) antiporter. The polypeptide is Cation/H(+) antiporter 9 (CHX9) (Arabidopsis thaliana (Mouse-ear cress)).